The chain runs to 196 residues: MSRYRGPRLKKIRRLGALPGLTRKTPKSGSNLKKKFHSGKKEQYRIRLQEKQKLRFHYGLTERQLLRYVHIAGKAKRSTGQVLLQLLEMRLDNILFRLGMAATIPGARQLVNHRHILVNGRIVNIPSFRCKPRDIITTKDNQRSQSLVQNSIASSDPGKLPKHLTIDTLEYKGLVNKILDRKWVGLKINELLVVEY.

The interval 16 to 36 is disordered; the sequence is GALPGLTRKTPKSGSNLKKKF. The 81-residue stretch at 89–169 folds into the S4 RNA-binding domain; it reads MRLDNILFRL…LPKHLTIDTL (81 aa).

It belongs to the universal ribosomal protein uS4 family. Part of the 30S ribosomal subunit. Contacts protein S5. The interaction surface between S4 and S5 is involved in control of translational fidelity.

Its subcellular location is the plastid. The protein localises to the chloroplast. Its function is as follows. One of the primary rRNA binding proteins, it binds directly to 16S rRNA where it nucleates assembly of the body of the 30S subunit. With S5 and S12 plays an important role in translational accuracy. This chain is Small ribosomal subunit protein uS4c (rps4), found in Brachypodium pinnatum (Tor grass).